Consider the following 314-residue polypeptide: MLIQILFLIILTLNCSYSTSYSTSNGIRLMTFNIWNSGANVENGQQKIAKHILMVNPDVVALQEVYANVTRNLTLMLGHPWVAVERNHEYPDTAILTRHVLIPNTNLSTSGAVGVKIMLRTGFMIHFWSLHLDYTSYGPYAANNKLVDKLDQIMAGENVGRGPQIYEILNLPMMKKWMEKVEDVPIFIAGDFNGPSHLDWTEQTKKIHGDWVIRWPATKELEEREFSDTFREIYPNVVSDPGITWSTVNKFNPEWNYTIPEPQDRIDFLFYKGPVVPYQILTYSGCEKPQRIPFHSKNDYPSDHFAVFADYTFI.

Residues 1 to 18 (MLIQILFLIILTLNCSYS) form the signal peptide. N-linked (GlcNAc...) asparagine glycosylation is found at Asn-68, Asn-72, Asn-106, and Asn-256.

Its subcellular location is the secreted. This is an uncharacterized protein from Caenorhabditis elegans.